Here is a 115-residue protein sequence, read N- to C-terminus: Large ribosomal subunit protein uL22c (115 aa).

It belongs to the universal ribosomal protein uL22 family. Part of the 50S ribosomal subunit.

It localises to the plastid. It is found in the chloroplast. In terms of biological role, this protein binds specifically to 23S rRNA. Its function is as follows. The globular domain of the protein is located near the polypeptide exit tunnel on the outside of the subunit, while an extended beta-hairpin is found that lines the wall of the exit tunnel in the center of the 70S ribosome. The polypeptide is Large ribosomal subunit protein uL22c (rpl22) (Thalassiosira pseudonana (Marine diatom)).